The sequence spans 474 residues: Gamma-aminobutyric acid receptor subunit beta-1 (474 aa).

Residues 1–25 (MWTVQNRESLGLLSFPVMVAMVCCA) form the signal peptide. At 26–245 (HSSNEPSNMS…SFRLKRNIGY (220 aa)) the chain is on the extracellular side. 2 N-linked (GlcNAc...) asparagine glycosylation sites follow: Asn-33 and Asn-105. Position 122 (Tyr-122) interacts with histamine. The cysteines at positions 161 and 175 are disulfide-linked. The N-linked (GlcNAc...) asparagine glycan is linked to Asn-174. Histamine-binding positions include 181–182 (SY) and Thr-227. 2 residues coordinate 4-aminobutanoate: Tyr-182 and Thr-227. Helical transmembrane passes span 246–267 (FILQ…SFWI), 271–293 (ASAA…STHL), and 305–327 (AIDI…YAFV). Residues 328–451 (NYIFFGKGPQ…DLTDVNSIDK (124 aa)) are Cytoplasmic-facing. The chain crosses the membrane as a helical span at residues 452–473 (WSRMFFPITFSLFNVVYWLYYV).

This sequence belongs to the ligand-gated ion channel (TC 1.A.9) family. Gamma-aminobutyric acid receptor (TC 1.A.9.5) subfamily. GABRB1 sub-subfamily. Heteropentamer, formed by a combination of alpha (GABRA1-6), beta (GABRB1-3), gamma (GABRG1-3), delta (GABRD), epsilon (GABRE), rho (GABRR1-3), pi (GABRP) and theta (GABRQ) chains, each subunit exhibiting distinct physiological and pharmacological properties. Binds UBQLN1.

It is found in the postsynaptic cell membrane. It localises to the cell membrane. The catalysed reaction is chloride(in) = chloride(out). With respect to regulation, potentiated by histamine. Its function is as follows. Beta subunit of the heteropentameric ligand-gated chloride channel gated by gamma-aminobutyric acid (GABA), a major inhibitory neurotransmitter in the brain. GABA-gated chloride channels, also named GABA(A) receptors (GABAAR), consist of five subunits arranged around a central pore and contain GABA active binding site(s) located at the alpha and beta subunit interface(s). When activated by GABA, GABAARs selectively allow the flow of chloride anions across the cell membrane down their electrochemical gradient. Chloride influx into the postsynaptic neuron following GABAAR opening decreases the neuron ability to generate a new action potential, thereby reducing nerve transmission. Beta-containing GABAARs can simultaneously bind GABA and histamine where histamine binds at the interface of two neighboring beta subunits, which may be involved in the regulation of sleep and wakefulness. In Rattus norvegicus (Rat), this protein is Gamma-aminobutyric acid receptor subunit beta-1.